The following is a 371-amino-acid chain: Protein STRICTOSIDINE SYNTHASE-LIKE 6 (371 aa).

Residues Met-1–Ser-21 form the signal peptide. Asn-101 and Asn-137 each carry an N-linked (GlcNAc...) asparagine glycan. Tyr-303 is modified (phosphotyrosine).

It belongs to the strictosidine synthase family.

Its subcellular location is the vacuole. The sequence is that of Protein STRICTOSIDINE SYNTHASE-LIKE 6 from Arabidopsis thaliana (Mouse-ear cress).